The chain runs to 70 residues: Large ribosomal subunit protein eL43 (70 aa).

Zn(2+)-binding residues include Cys-36, Cys-39, Cys-55, and Cys-58. The C4-type zinc-finger motif lies at 36 to 58; that stretch reads CPVCKTTGKVVRIASGVWYCKKC.

Belongs to the eukaryotic ribosomal protein eL43 family. Putative zinc-binding subfamily. As to quaternary structure, part of the 50S ribosomal subunit. The cofactor is Zn(2+).

Its function is as follows. Binds to the 23S rRNA. The sequence is that of Large ribosomal subunit protein eL43 from Sulfurisphaera tokodaii (strain DSM 16993 / JCM 10545 / NBRC 100140 / 7) (Sulfolobus tokodaii).